We begin with the raw amino-acid sequence, 206 residues long: CASP-like protein 1F1 (206 aa).

The Cytoplasmic portion of the chain corresponds to methionine 1–lysine 43. The chain crosses the membrane as a helical span at residues leucine 44–alanine 64. Residues tryptophan 65–lysine 92 are Extracellular-facing. A helical membrane pass occupies residues phenylalanine 93 to phenylalanine 113. The Cytoplasmic portion of the chain corresponds to serine 114–lysine 124. The chain crosses the membrane as a helical span at residues phenylalanine 125–alanine 145. The Extracellular portion of the chain corresponds to alanine 146–arginine 177. A helical transmembrane segment spans residues leucine 178–alanine 198. Residues asparagine 199–valine 206 are Cytoplasmic-facing.

Belongs to the Casparian strip membrane proteins (CASP) family. Homodimer and heterodimers.

It localises to the cell membrane. The sequence is that of CASP-like protein 1F1 from Vitis vinifera (Grape).